Reading from the N-terminus, the 342-residue chain is Phenylalanine--tRNA ligase alpha subunit (342 aa).

Glu-255 lines the Mg(2+) pocket.

This sequence belongs to the class-II aminoacyl-tRNA synthetase family. Phe-tRNA synthetase alpha subunit type 1 subfamily. As to quaternary structure, tetramer of two alpha and two beta subunits. Requires Mg(2+) as cofactor.

The protein localises to the cytoplasm. The enzyme catalyses tRNA(Phe) + L-phenylalanine + ATP = L-phenylalanyl-tRNA(Phe) + AMP + diphosphate + H(+). The sequence is that of Phenylalanine--tRNA ligase alpha subunit from Pelotomaculum thermopropionicum (strain DSM 13744 / JCM 10971 / SI).